We begin with the raw amino-acid sequence, 1024 residues long: Protein tiptop (1024 aa).

The segment covering 20 to 35 (ELTSPRCQSRDSNTSA) has biased composition (polar residues). Disordered stretches follow at residues 20 to 40 (ELTS…AGAG) and 138 to 215 (EGEV…ISAD). A compositionally biased stretch (acidic residues) spans 159 to 175 (DDQEEDQEQDQEQEQEQ). Residues 317 to 341 (FKCVWCKQSFSTLANLTAHMKETQH) form a C2H2-type 1 zinc finger. A disordered region spans residues 350–392 (LPTGGVGTPSAPPPTRLATSASNSACSSSSSSTSSSSNSSKSE). A compositionally biased stretch (low complexity) spans 368–391 (TSASNSACSSSSSSTSSSSNSSKS). The C2H2-type 2 zinc-finger motif lies at 426–450 (LKCMWCGQSFRSLAEMTSHMQETQH). 5 disordered regions span residues 466–489 (GDER…SSPS), 519–576 (AQKS…SLDS), 712–759 (SRDR…IKAE), 786–818 (FSME…SLLA), and 868–891 (ETTD…ASAT). The span at 477–489 (VPSTSTAAPSSPS) shows a compositional bias: low complexity. The C2H2-type 3 zinc-finger motif lies at 499 to 523 (LTCKVCDQAFGSLKELSTHMAQKSH). Positions 527 to 537 (SPAPSASPPAA) are enriched in low complexity. The segment covering 543-558 (KRGRQNRNEKRKKSLP) has biased composition (basic residues). The segment covering 718 to 729 (SESSSASRVESS) has biased composition (low complexity). Residues 745-755 (TPAPPPPPPPT) show a composition bias toward pro residues. A compositionally biased stretch (basic and acidic residues) spans 786 to 795 (FSMEACRESP). Positions 796–808 (RSVSKSPAPQTER) are enriched in polar residues. Positions 874-891 (STGLRSASSAGSSTASAT) are enriched in low complexity. The segment at 926-949 (IKCSYCDTPFASKGAYRHHLSKVH) adopts a C2H2-type 4 zinc-finger fold. The tract at residues 954–1004 (AGEDSPRLKSPAVQSPRSMPLASPRRSASRSPATGSQQPPPSPTISPYDES) is disordered. Over residues 968–990 (SPRSMPLASPRRSASRSPATGSQ) the composition is skewed to low complexity.

This sequence belongs to the teashirt C2H2-type zinc-finger protein family. As to expression, expression in the Malpighian tubules (MTs) and stomatogastric nervous system starts at embryonic stage 10. At stage 11, expression in the head domain is initiated in the clypeolabrum in two bilaterally symmetric clusters of cells. At stage 12, expression appears in the central nervous system (CNS) of the trunk and the epidermis. The staining in the hindgut is maintained throughout embryogenesis. At stage 13, expression is present in elongating MTs. The anterior staining is detected in cells that invaginate into the stomodeum and by stage 15 onwards, in cells close to the pharynx. Also expressed in cells of the brain, the second constriction of the gut, the trunk epidermis, the anterior segments of the CNS (the three thoracic and the first two abdominal segments) and in the MTs. From stage 12 onwards, tsh and tio are colocalized in some cells.

It is found in the nucleus. In terms of biological role, tiptop (tio) and teashirt (tsh) have, on the whole, common activities. Tio and tsh repress each other's expression and tsh has a crucial role for trunk patterning that is in part masked by ectopic expression of tiptop. Both genes share a common activity required for the activation of Ser and svb and the maintenance of en and wg. The protein is Protein tiptop (tio) of Drosophila melanogaster (Fruit fly).